The following is a 415-amino-acid chain: Squalene synthase 12 (415 aa).

A run of 2 helical transmembrane segments spans residues 281-301 (AIFR…ALCF) and 391-411 (LIAI…SNLL).

This sequence belongs to the phytoene/squalene synthase family. Mg(2+) serves as cofactor. Mn(2+) is required as a cofactor.

Its subcellular location is the endoplasmic reticulum membrane. The catalysed reaction is 2 (2E,6E)-farnesyl diphosphate + NADH + H(+) = squalene + 2 diphosphate + NAD(+). It catalyses the reaction 2 (2E,6E)-farnesyl diphosphate + NADPH + H(+) = squalene + 2 diphosphate + NADP(+). The protein operates within terpene metabolism; lanosterol biosynthesis; lanosterol from farnesyl diphosphate: step 1/3. Component of the triterpene saponins (e.g. ginsenosides or panaxosides) and phytosterols biosynthetic pathways. Catalyzes the biosynthesis of squalene. The sequence is that of Squalene synthase 12 from Panax ginseng (Korean ginseng).